We begin with the raw amino-acid sequence, 462 residues long: ATP synthase subunit beta (462 aa).

150-157 lines the ATP pocket; that stretch reads GGAGVGKT.

It belongs to the ATPase alpha/beta chains family. In terms of assembly, F-type ATPases have 2 components, CF(1) - the catalytic core - and CF(0) - the membrane proton channel. CF(1) has five subunits: alpha(3), beta(3), gamma(1), delta(1), epsilon(1). CF(0) has three main subunits: a(1), b(2) and c(9-12). The alpha and beta chains form an alternating ring which encloses part of the gamma chain. CF(1) is attached to CF(0) by a central stalk formed by the gamma and epsilon chains, while a peripheral stalk is formed by the delta and b chains. In this bacterium the a and b subunits are transcribed but do not seem to be translated, thus the ATP synthase consists of the alpha, beta, gamma, delta, epsilon and c subunits.

Its subcellular location is the cell membrane. The enzyme catalyses ATP + H2O + 4 H(+)(in) = ADP + phosphate + 5 H(+)(out). Its function is as follows. Produces ATP from ADP in the presence of a proton gradient across the membrane. The catalytic sites are hosted primarily by the beta subunits. The sequence is that of ATP synthase subunit beta from Moorella thermoacetica (strain ATCC 39073 / JCM 9320).